Consider the following 65-residue polypeptide: Small ribosomal subunit protein bS21 (65 aa).

Residues 43-52 (EKKRVKEALA) are compositionally biased toward basic and acidic residues. Residues 43 to 65 (EKKRVKEALARKRSRKKARKEQD) are disordered. A compositionally biased stretch (basic residues) spans 53-65 (RKRSRKKARKEQD).

The protein belongs to the bacterial ribosomal protein bS21 family.

This Koribacter versatilis (strain Ellin345) protein is Small ribosomal subunit protein bS21.